The primary structure comprises 103 residues: Small ribosomal subunit protein uS10 (103 aa).

Belongs to the universal ribosomal protein uS10 family. In terms of assembly, part of the 30S ribosomal subunit.

In terms of biological role, involved in the binding of tRNA to the ribosomes. This Shewanella baltica (strain OS223) protein is Small ribosomal subunit protein uS10.